Consider the following 565-residue polypeptide: NAD-dependent malic enzyme (565 aa).

The Proton donor role is filled by Y104. R157 contributes to the NAD(+) binding site. The Proton acceptor role is filled by K175. A divalent metal cation is bound by residues E246, D247, and D270. NAD(+) contacts are provided by D270 and N418.

The protein belongs to the malic enzymes family. Homotetramer. Mg(2+) serves as cofactor. Mn(2+) is required as a cofactor.

It carries out the reaction (S)-malate + NAD(+) = pyruvate + CO2 + NADH. The enzyme catalyses oxaloacetate + H(+) = pyruvate + CO2. The protein is NAD-dependent malic enzyme of Escherichia coli O9:H4 (strain HS).